The chain runs to 91 residues: Large ribosomal subunit protein uL22 (91 aa).

Belongs to the universal ribosomal protein uL22 family. As to quaternary structure, part of the 50S ribosomal subunit.

In terms of biological role, this protein binds specifically to 23S rRNA; its binding is stimulated by other ribosomal proteins, e.g. L4, L17, and L20. It is important during the early stages of 50S assembly. It makes multiple contacts with different domains of the 23S rRNA in the assembled 50S subunit and ribosome. Functionally, the globular domain of the protein is located near the polypeptide exit tunnel on the outside of the subunit, while an extended beta-hairpin is found that lines the wall of the exit tunnel in the center of the 70S ribosome. In Pigeon pea witches'-broom phytoplasma, this protein is Large ribosomal subunit protein uL22 (rplV).